A 707-amino-acid chain; its full sequence is MAP kinase-interacting serine/threonine-protein kinase mnk-1 (707 aa).

A compositionally biased stretch (polar residues) spans 1 to 24 (MFFLDNTDSMTSSSRGITMPNTIS). Disordered regions lie at residues 1-29 (MFFL…HEDV) and 101-131 (RQRE…YVGR). The 291-residue stretch at 203–493 (KLTDEHLGSG…ADQILSHRWL (291 aa)) folds into the Protein kinase domain. ATP-binding positions include 209–217 (LGSGAYGSV) and Lys232. Asp325 acts as the Proton acceptor in catalysis. Disordered stretches follow at residues 589 to 628 (RSGE…SADD) and 688 to 707 (FEDE…QVNV).

The protein belongs to the protein kinase superfamily. CAMK Ser/Thr protein kinase family. The cofactor is Mg(2+). Expressed in pharynx, intestine, vulva and body wall muscles.

It is found in the nucleus. It localises to the cytoplasm. The enzyme catalyses L-seryl-[protein] + ATP = O-phospho-L-seryl-[protein] + ADP + H(+). It carries out the reaction L-threonyl-[protein] + ATP = O-phospho-L-threonyl-[protein] + ADP + H(+). Its function is as follows. Serine/threonine-protein kinase which is required in the germline to positively regulate lifespan. May play a role in body wall muscle contraction. May be involved in embryonic cytokinesis. The sequence is that of MAP kinase-interacting serine/threonine-protein kinase mnk-1 from Caenorhabditis elegans.